A 79-amino-acid chain; its full sequence is MNKTIEYQKEFLKENNQLLNIPIKKNILKEILQNDEQDTIITNCITKEVSINLDLIKNPKVLYSIYIMVVEYLKSINIT.

Belongs to the asfivirus D79L family.

This is an uncharacterized protein from Ornithodoros (relapsing fever ticks).